The chain runs to 575 residues: Proline--tRNA ligase 1 (575 aa).

The protein belongs to the class-II aminoacyl-tRNA synthetase family. ProS type 1 subfamily. As to quaternary structure, homodimer.

The protein localises to the cytoplasm. It carries out the reaction tRNA(Pro) + L-proline + ATP = L-prolyl-tRNA(Pro) + AMP + diphosphate. Functionally, catalyzes the attachment of proline to tRNA(Pro) in a two-step reaction: proline is first activated by ATP to form Pro-AMP and then transferred to the acceptor end of tRNA(Pro). As ProRS can inadvertently accommodate and process non-cognate amino acids such as alanine and cysteine, to avoid such errors it has two additional distinct editing activities against alanine. One activity is designated as 'pretransfer' editing and involves the tRNA(Pro)-independent hydrolysis of activated Ala-AMP. The other activity is designated 'posttransfer' editing and involves deacylation of mischarged Ala-tRNA(Pro). The misacylated Cys-tRNA(Pro) is not edited by ProRS. This chain is Proline--tRNA ligase 1, found in Anaeromyxobacter dehalogenans (strain 2CP-C).